A 350-amino-acid chain; its full sequence is MSESLQSVLIIGGSGFLGLHLIEQFYRHCPNVAITVFDVRPLPEKLSKYFTFDPSKIQFFKGDLTSDKDVSDAINQSKCDVIVHSASPMHGLPQEIYEKVNVQGTKNLLSVAQKLHVKALVYTSSAGVIFNGQDVINADETWPYPEVHMDGYNETKAAAEEAVMKANDNDQLRTVCLRPAGIFGPGDRQLVPGLRASAKLGQSKYQLGDNNNLFDWTYVGNVADAHVLAAQKILDKSTRDDISGQTFFITNDSPTYFWTLARTVWKNDGYIDKYYIKLPYPVALTLGYISEFVAKNILKKEPGITPFRVKVVCAIRYHNIAKAKKLLGYKPEVDLETGINYTLDWMNEDL.

Residues 12–18, 63–64, and 85–87 contribute to the NADP(+) site; these read GGSGFLG, DL, and SAS. Substrate is bound by residues Ser-125 and Tyr-152. NADP(+) is bound by residues Tyr-152, Lys-156, and 179-182; that span reads PAGI. Lys-156 acts as the Proton donor in catalysis.

This sequence belongs to the 3-beta-HSD family. Heterotetramer of ERG25, ERG26, ERG27 and ERG28. ERG28 acts as a scaffold to tether ERG27 and other 4,4-demethylation-related enzymes, forming a demethylation enzyme complex, in the endoplasmic reticulum.

It localises to the endoplasmic reticulum membrane. The enzyme catalyses 4beta-methylzymosterol-4alpha-carboxylate + NADP(+) = 3-dehydro-4-methylzymosterol + CO2 + NADPH. It participates in steroid biosynthesis; zymosterol biosynthesis; zymosterol from lanosterol: step 4/6. Sterol-4-alpha-carboxylate 3-dehydrogenase; part of the third module of ergosterol biosynthesis pathway that includes the late steps of the pathway. ERG26 is a catalytic component of the C-4 demethylation complex that catalyzes the oxidative decarboxylation that results in a reduction of the 3-beta-hydroxy group at the C-3 carbon to an oxo group. The third module or late pathway involves the ergosterol synthesis itself through consecutive reactions that mainly occur in the endoplasmic reticulum (ER) membrane. Firstly, the squalene synthase ERG9 catalyzes the condensation of 2 farnesyl pyrophosphate moieties to form squalene, which is the precursor of all steroids. Squalene synthase is crucial for balancing the incorporation of farnesyl diphosphate (FPP) into sterol and nonsterol isoprene synthesis. Secondly, the squalene epoxidase ERG1 catalyzes the stereospecific oxidation of squalene to (S)-2,3-epoxysqualene, which is considered to be a rate-limiting enzyme in steroid biosynthesis. Then, the lanosterol synthase ERG7 catalyzes the cyclization of (S)-2,3 oxidosqualene to lanosterol, a reaction that forms the sterol core. In the next steps, lanosterol is transformed to zymosterol through a complex process involving various demethylation, reduction and desaturation reactions. The lanosterol 14-alpha-demethylase ERG11 (also known as CYP51) catalyzes C14-demethylation of lanosterol to produce 4,4'-dimethyl cholesta-8,14,24-triene-3-beta-ol, which is critical for ergosterol biosynthesis. The C-14 reductase ERG24 reduces the C14=C15 double bond of 4,4-dimethyl-cholesta-8,14,24-trienol to produce 4,4-dimethyl-cholesta-8,24-dienol. 4,4-dimethyl-cholesta-8,24-dienol is substrate of the C-4 demethylation complex ERG25-ERG26-ERG27 in which ERG25 catalyzes the three-step monooxygenation required for the demethylation of 4,4-dimethyl and 4alpha-methylsterols, ERG26 catalyzes the oxidative decarboxylation that results in a reduction of the 3-beta-hydroxy group at the C-3 carbon to an oxo group, and ERG27 is responsible for the reduction of the keto group on the C-3. ERG28 has a role as a scaffold to help anchor ERG25, ERG26 and ERG27 to the endoplasmic reticulum and ERG29 regulates the activity of the iron-containing C4-methylsterol oxidase ERG25. Then, the sterol 24-C-methyltransferase ERG6 catalyzes the methyl transfer from S-adenosyl-methionine to the C-24 of zymosterol to form fecosterol. The C-8 sterol isomerase ERG2 catalyzes the reaction which results in unsaturation at C-7 in the B ring of sterols and thus converts fecosterol to episterol. The sterol-C5-desaturase ERG3 then catalyzes the introduction of a C-5 double bond in the B ring to produce 5-dehydroepisterol. The C-22 sterol desaturase ERG5 further converts 5-dehydroepisterol into ergosta-5,7,22,24(28)-tetraen-3beta-ol by forming the C-22(23) double bond in the sterol side chain. Finally, ergosta-5,7,22,24(28)-tetraen-3beta-ol is substrate of the C-24(28) sterol reductase ERG4 to produce ergosterol. This Candida albicans (strain SC5314 / ATCC MYA-2876) (Yeast) protein is Sterol-4-alpha-carboxylate 3-dehydrogenase ERG26, decarboxylating.